The following is a 443-amino-acid chain: Gasdermin-A2 (443 aa).

The tract at residues 1–249 is triggers pyroptosis; the sequence is MSMFEDVTRA…QGSTVQMISG (249 aa). 9 to 13 contacts a cardiolipin; it reads RALAR. 4 beta stranded membrane passes run 78-95, 99-120, 164-179, and 183-197; these read NFSF…DVEV, MKVK…MLSV, VTLK…FSLN, and LGLQ…AVTI. Residues 249-312 are a coiled coil; that stretch reads GEMHEDFKTL…GALDKGHEVT (64 aa).

It belongs to the gasdermin family. In terms of assembly, homooligomer; homooligomeric ring-shaped pore complex containing 18-36 subunits when inserted in the membrane. Post-translationally, cleavage relieves autoinhibition by releasing the N-terminal moiety (Gasdermin-A2, N-terminal) that initiates pyroptosis. In contrast to Gsdma, not cleaved by bacterial effector protein SpeB. In terms of processing, palmitoylated. Expressed in the gastrointestinal tract, specifically from the middle to the upper region of the gastric mucosa in the glandular stomach.

Its subcellular location is the cytoplasm. It localises to the perinuclear region. The protein resides in the cytosol. It is found in the cell membrane. Its activity is regulated as follows. The full-length protein before cleavage is inactive: intramolecular interactions between N- and C-terminal domains mediate autoinhibition in the absence of activation signal. The intrinsic pyroptosis-inducing activity is carried by the released N-terminal moiety (Gasdermin-A2, N-terminal). This form constitutes the precursor of the pore-forming protein and acts as a sensor of infection: upon bacterial infection, specifically cleaved by some bacterial effector protein, releasing the N-terminal moiety (Gasdermin-A2, N-terminal) that binds to membranes and forms pores, triggering pyroptosis. Functionally, pore-forming protein that causes membrane permeabilization and pyroptosis. Released upon cleavage of Gasdermin-A2, and binds to membrane inner leaflet lipids. Homooligomerizes within the membrane and forms pores of 10-15 nanometers (nm) of inner diameter, triggering pyroptosis. Binds to membrane inner leaflet lipids, such as phosphatidylinositol (4,5)-bisphosphate. In Mus musculus (Mouse), this protein is Gasdermin-A2.